The sequence spans 525 residues: GMP synthase [glutamine-hydrolyzing] (525 aa).

The region spanning 8 to 207 (KILILDFGSQ…AVAICGCGTN (200 aa)) is the Glutamine amidotransferase type-1 domain. The active-site Nucleophile is Cys-85. Catalysis depends on residues His-181 and Glu-183. The 193-residue stretch at 208-400 (WKPSSIIEDA…LGLPYNMLYR (193 aa)) folds into the GMPS ATP-PPase domain. ATP is bound at residue 235–241 (SGGVDSS).

In terms of assembly, homodimer.

It carries out the reaction XMP + L-glutamine + ATP + H2O = GMP + L-glutamate + AMP + diphosphate + 2 H(+). It participates in purine metabolism; GMP biosynthesis; GMP from XMP (L-Gln route): step 1/1. Its function is as follows. Catalyzes the synthesis of GMP from XMP. The chain is GMP synthase [glutamine-hydrolyzing] from Shewanella denitrificans (strain OS217 / ATCC BAA-1090 / DSM 15013).